The chain runs to 375 residues: V-type proton ATPase subunit C (375 aa).

This sequence belongs to the V-ATPase C subunit family. V-ATPase is a heteromultimeric enzyme composed of a peripheral catalytic V1 complex (components A to H) attached to an integral membrane V0 proton pore complex (components: a, c, c'', d and e). Phosphorylated on Ser/Thr residues by WNK8.

Its subcellular location is the vacuole membrane. Its function is as follows. Subunit of the peripheral V1 complex of vacuolar ATPase. Subunit C is necessary for the assembly of the catalytic sector of the enzyme and is likely to have a specific function in its catalytic activity. V-ATPase is responsible for acidifying a variety of intracellular compartments in eukaryotic cells. The polypeptide is V-type proton ATPase subunit C (VHA-C) (Arabidopsis thaliana (Mouse-ear cress)).